A 184-amino-acid chain; its full sequence is Probable chorismate pyruvate-lyase 1 (184 aa).

Residues Arg-70, Leu-108, and Glu-166 each contribute to the substrate site.

Belongs to the UbiC family.

It localises to the cytoplasm. It carries out the reaction chorismate = 4-hydroxybenzoate + pyruvate. It functions in the pathway cofactor biosynthesis; ubiquinone biosynthesis. Functionally, removes the pyruvyl group from chorismate, with concomitant aromatization of the ring, to provide 4-hydroxybenzoate (4HB) for the ubiquinone pathway. The polypeptide is Probable chorismate pyruvate-lyase 1 (Burkholderia pseudomallei (strain 1710b)).